The chain runs to 241 residues: Ribonuclease PH (241 aa).

Residues arginine 87 and 125–127 (GTR) contribute to the phosphate site.

Belongs to the RNase PH family. As to quaternary structure, homohexameric ring arranged as a trimer of dimers.

The enzyme catalyses tRNA(n+1) + phosphate = tRNA(n) + a ribonucleoside 5'-diphosphate. In terms of biological role, phosphorolytic 3'-5' exoribonuclease that plays an important role in tRNA 3'-end maturation. Removes nucleotide residues following the 3'-CCA terminus of tRNAs; can also add nucleotides to the ends of RNA molecules by using nucleoside diphosphates as substrates, but this may not be physiologically important. Probably plays a role in initiation of 16S rRNA degradation (leading to ribosome degradation) during starvation. This Salinispora arenicola (strain CNS-205) protein is Ribonuclease PH.